The sequence spans 319 residues: Melanoma-associated antigen B2 (319 aa).

Residues 1 to 17 (MPRGQKSKLRAREKRRK) show a composition bias toward basic residues. The segment at 1-112 (MPRGQKSKLR…TKSPSEDPLT (112 aa)) is disordered. Composition is skewed to low complexity over residues 39-57 (PCCSSSVSGGAASSSPAAG), 67-79 (TTAAAAAAGVSST), and 94-105 (ASSSQASTSTKS). Phosphoserine occurs at positions 77 and 105. The region spanning 111 to 310 (LTRKSGSLVQ…CAFPTHYEEA (200 aa)) is the MAGE domain.

In terms of assembly, interacts with TRIM28. Expressed in testis and placenta, and in a significant fraction of tumors of various histologic types.

In terms of biological role, may enhance ubiquitin ligase activity of RING-type zinc finger-containing E3 ubiquitin-protein ligases. Proposed to act through recruitment and/or stabilization of the Ubl-conjugating enzyme (E2) at the E3:substrate complex. This Homo sapiens (Human) protein is Melanoma-associated antigen B2 (MAGEB2).